A 127-amino-acid polypeptide reads, in one-letter code: Modulator protein MzrA (127 aa).

The Cytoplasmic portion of the chain corresponds to 1–11; sequence MRKPRVTLRHL. The helical transmembrane segment at 12–31 threads the bilayer; it reads AWSTMLLMVLGTGMLFWSAV. The Periplasmic portion of the chain corresponds to 32-127; that stretch reads RQQESTLAIR…RLRDAPHRMG (96 aa).

The protein belongs to the MzrA family. In terms of assembly, interacts with EnvZ.

The protein localises to the cell inner membrane. Functionally, modulates the activity of the EnvZ/OmpR two-component regulatory system, probably by directly modulating EnvZ enzymatic activity and increasing stability of phosphorylated OmpR. In Citrobacter rodentium (strain ICC168) (Citrobacter freundii biotype 4280), this protein is Modulator protein MzrA.